We begin with the raw amino-acid sequence, 485 residues long: Cytochrome P450 monooxygenase tndB (485 aa).

A helical membrane pass occupies residues 20 to 40; that stretch reads VYGISAVIAVGLAIYSASLAI. Position 481 (cysteine 481) interacts with heme.

It belongs to the cytochrome P450 family. It depends on heme as a cofactor.

Its subcellular location is the membrane. It functions in the pathway secondary metabolite biosynthesis; terpenoid biosynthesis. Its function is as follows. Cytochrome P450 monooxygenase; part of the gene cluster that mediates the biosynthesis of talaronoid C, a fusicoccane diterpenoid with an unprecedented tricyclic 5/8/6 ring system. The first step in the pathway is performed by the fusicoccadiene synthase tndC that possesses both prenyl transferase and terpene cyclase activity, converting isopentenyl diphosphate and dimethylallyl diphosphate into geranylgeranyl diphosphate (GGDP) and further converting GGDP into talarodiene, a precursor for talaronoid C. The remaining enzymes from the cluster include the cytochrome P450 monooxygenase tndB, the aldehyde reductase tndE and the alcohol dehydrogenase tndF that are involved in the conversion of talarodiene into talaronoid C. The sequence is that of Cytochrome P450 monooxygenase tndB from Aspergillus flavipes.